Consider the following 361-residue polypeptide: MYGKGKSNSSAVPSDSQAREKLALYVYEYLLHVGAQKSAQTFLSEIRWEKNITLGEPPGFLHSWWCVFWDLYCAAPERRETCEHSSEAKAFHDYSAAAAPSPVLGNIPPGDGMPVGPVPPGFFQPFMSPRYPGGPRPPLRIPNQALGGVPGSQPLLPSGMDPTRQQGHPNMGGPMQRMTPPRGMVPLGPQNYGGAMRPPLNALGGPGMPGMNMGPGGGRPWPNPTNANSIPYSSASPGNYVGPPGGGGPPGTPIMPSPADSTNSGDNMYTLMNAVPPGPNRPNFPMGPGSDGPMGGLGGMESHHMNGSLGSGDMDSISKNSPNNMSLSNQPGTPRDDGEMGGNFLNPFQSESYSPSMTMSV.

Lys6 is subject to N6-acetyllysine. One can recognise a LisH domain in the interval 18-50 (AREKLALYVYEYLLHVGAQKSAQTFLSEIRWEK). 2 disordered regions span residues 147–171 (GGVPGSQPLLPSGMDPTRQQGHPNM) and 194–361 (GAMR…TMSV). Gly residues predominate over residues 204–219 (GGPGMPGMNMGPGGGR). Residues 225–236 (TNANSIPYSSAS) show a composition bias toward polar residues. Residues 246–256 (GGGPPGTPIMP) are compositionally biased toward pro residues. Residues 289–299 (GSDGPMGGLGG) are compositionally biased toward gly residues. Residues 317 to 332 (ISKNSPNNMSLSNQPG) are compositionally biased toward polar residues. Ser321 carries the phosphoserine modification. Phosphothreonine is present on Thr333. The segment covering 346–361 (NPFQSESYSPSMTMSV) has biased composition (polar residues).

As to expression, ubiquitous.

Its subcellular location is the nucleus. The protein is Single-stranded DNA-binding protein 2 (SSBP2) of Homo sapiens (Human).